A 398-amino-acid polypeptide reads, in one-letter code: Stomatin-like protein 1 (398 aa).

The Tyrosine-type lysosomal sorting signal motif lies at 6–10 (GYRAL). At serine 28 the chain carries Phosphoserine. Residues 58–78 (LISFLGFLLLLVTFPISGWFA) traverse the membrane as a helical; Signal-anchor for type III membrane protein segment. The Cytoplasmic portion of the chain corresponds to 79-398 (LKIVPTYERM…KLEAVLRALK (320 aa)). Positions 287–398 (KQPLAEGLLT…KLEAVLRALK (112 aa)) constitute an SCP2 domain.

The protein belongs to the band 7/mec-2 family. In terms of assembly, interacts with STOM; may redistribute STOM from the plasma membrane to late endosomes. Interacts with FBXW7 isoform 3 and CDK2. Ubiquitously expressed at low levels. Expression is highest in brain.

It localises to the membrane. Its subcellular location is the late endosome membrane. The protein localises to the membrane raft. It is found in the cell membrane. The protein resides in the cytoplasmic vesicle. Functionally, may play a role in cholesterol transfer to late endosomes. May play a role in modulating membrane acid-sensing ion channels. Can specifically inhibit proton-gated current of ASIC1 isoform 1. Can increase inactivation speed of ASIC3. May be involved in regulation of proton sensing in dorsal root ganglions. May play a role in protecting FBXW7 isoform 3 from degradation. This is Stomatin-like protein 1 (STOML1) from Homo sapiens (Human).